The following is a 259-amino-acid chain: MTPDLQLALELAEKAGKLTLDYFGRRSLQVFSKRDDTPVTEADRNAEELIRQGISAKFPDDGLFGEEFDEHPSGNGRRWIIDPIDGTRSFIHGVPLYGVMIALEVEGAMQLGVINFPALGELYQAERGSGAFMNGSPVQVSAIAENSASTVVFTEKEYLLDPPSNHPVDQLRIDAGLVRGWGDCYGHMLVASGRAEVAVDKIMSPWDCAAVIPIVEEAGGCCFDYRGRQSIIDGEGLVSANNAMGRNLIAAIGNGERDR.

The Mg(2+) site is built by Glu66, Asp82, Ile84, Asp85, and Asp207. Residue Glu66 coordinates substrate. Substrate contacts are provided by residues Ile84–Thr87 and Asp207.

Belongs to the inositol monophosphatase superfamily. Mg(2+) serves as cofactor.

It catalyses the reaction L-histidinol phosphate + H2O = L-histidinol + phosphate. Its pathway is amino-acid biosynthesis; L-histidine biosynthesis; L-histidine from 5-phospho-alpha-D-ribose 1-diphosphate: step 8/9. Its function is as follows. Catalyzes the dephosphorylation of histidinol-phosphate to histidinol, the direct precursor of histidine. This chain is Histidinol-phosphatase (hisN), found in Chlorobaculum parvum (strain DSM 263 / NCIMB 8327) (Chlorobium vibrioforme subsp. thiosulfatophilum).